Consider the following 589-residue polypeptide: V-type ATP synthase alpha chain (589 aa).

239-246 contributes to the ATP binding site; that stretch reads GPFGAGKT.

Belongs to the ATPase alpha/beta chains family.

The enzyme catalyses ATP + H2O + 4 H(+)(in) = ADP + phosphate + 5 H(+)(out). Functionally, produces ATP from ADP in the presence of a proton gradient across the membrane. The V-type alpha chain is a catalytic subunit. This Treponema denticola (strain ATCC 35405 / DSM 14222 / CIP 103919 / JCM 8153 / KCTC 15104) protein is V-type ATP synthase alpha chain.